We begin with the raw amino-acid sequence, 430 residues long: Enolase (430 aa).

Glutamine 163 contributes to the (2R)-2-phosphoglycerate binding site. Glutamate 205 serves as the catalytic Proton donor. Aspartate 242, glutamate 288, and aspartate 315 together coordinate Mg(2+). (2R)-2-phosphoglycerate is bound by residues lysine 340, arginine 369, serine 370, and lysine 391. Lysine 340 acts as the Proton acceptor in catalysis.

This sequence belongs to the enolase family. The cofactor is Mg(2+).

It localises to the cytoplasm. Its subcellular location is the secreted. The protein localises to the cell surface. It carries out the reaction (2R)-2-phosphoglycerate = phosphoenolpyruvate + H2O. The protein operates within carbohydrate degradation; glycolysis; pyruvate from D-glyceraldehyde 3-phosphate: step 4/5. Functionally, catalyzes the reversible conversion of 2-phosphoglycerate (2-PG) into phosphoenolpyruvate (PEP). It is essential for the degradation of carbohydrates via glycolysis. This Acidobacterium capsulatum (strain ATCC 51196 / DSM 11244 / BCRC 80197 / JCM 7670 / NBRC 15755 / NCIMB 13165 / 161) protein is Enolase.